Here is a 132-residue protein sequence, read N- to C-terminus: PGA2-homolog C27.01c (132 aa).

The chain crosses the membrane as a helical span at residues 17–34 (WIRIIVYVGGYMLIRPYL). 2 disordered regions span residues 50–90 (LLEG…DAEF) and 106–132 (EYFK…HLED). A compositionally biased stretch (basic and acidic residues) spans 62–75 (EMTHGTKPKEHGEF). A compositionally biased stretch (acidic residues) spans 76 to 87 (DTDDEEEEENPD). Phosphothreonine is present on Thr-77. The segment covering 106–115 (EYFKNQDKSP) has biased composition (basic and acidic residues). Residues 119-132 (YADDDEDIEEHLED) show a composition bias toward acidic residues.

Belongs to the PGA2 family.

Its subcellular location is the endoplasmic reticulum membrane. The protein localises to the nucleus membrane. Functionally, involved processing and trafficking glycosylated proteins. This is PGA2-homolog C27.01c from Schizosaccharomyces pombe (strain 972 / ATCC 24843) (Fission yeast).